The following is a 196-amino-acid chain: Small ribosomal subunit protein uS4c (196 aa).

A disordered region spans residues 15-41; the sequence is LGALPGLTSKRPRSGSDLKNPLRSGKR. The region spanning 89–150 is the S4 RNA-binding domain; the sequence is MRLDNILFRL…KQRSKALIQN (62 aa).

This sequence belongs to the universal ribosomal protein uS4 family. Part of the 30S ribosomal subunit. Contacts protein S5. The interaction surface between S4 and S5 is involved in control of translational fidelity.

Its subcellular location is the plastid. The protein localises to the chloroplast. In terms of biological role, one of the primary rRNA binding proteins, it binds directly to 16S rRNA where it nucleates assembly of the body of the 30S subunit. Its function is as follows. With S5 and S12 plays an important role in translational accuracy. The chain is Small ribosomal subunit protein uS4c (rps4) from Narcissus odorus (Campernelle jonquil).